Reading from the N-terminus, the 78-residue chain is Large ribosomal subunit protein bL28 (78 aa).

This sequence belongs to the bacterial ribosomal protein bL28 family.

The chain is Large ribosomal subunit protein bL28 from Shigella boydii serotype 4 (strain Sb227).